A 116-amino-acid polypeptide reads, in one-letter code: Ribonuclease P protein component (116 aa).

It belongs to the RnpA family. In terms of assembly, consists of a catalytic RNA component (M1 or rnpB) and a protein subunit.

The catalysed reaction is Endonucleolytic cleavage of RNA, removing 5'-extranucleotides from tRNA precursor.. In terms of biological role, RNaseP catalyzes the removal of the 5'-leader sequence from pre-tRNA to produce the mature 5'-terminus. It can also cleave other RNA substrates such as 4.5S RNA. The protein component plays an auxiliary but essential role in vivo by binding to the 5'-leader sequence and broadening the substrate specificity of the ribozyme. The protein is Ribonuclease P protein component of Lachnoclostridium phytofermentans (strain ATCC 700394 / DSM 18823 / ISDg) (Clostridium phytofermentans).